We begin with the raw amino-acid sequence, 505 residues long: Protein ERGIC-53-like (505 aa).

Residues 1–25 (MLEIRGLSPSLCLLSLLLVLHGAER) form the signal peptide. Topologically, residues 26 to 438 (SQPPPRRRFE…SGWLLGSSTC (413 aa)) are lumenal. In terms of domain architecture, L-type lectin-like spans 32–254 (RRFEYKLSFK…DVLSFLTFSL (223 aa)). An N-linked (GlcNAc...) asparagine glycan is attached at asparagine 84. A disulfide bridge links cysteine 177 with cysteine 216. Residues 439 to 459 (LHTSIFLFFLLLQTVGFFCYV) form a helical membrane-spanning segment. Over 460-505 (NFSRQELDKRLQEYLSTGSLSLEPALPITRTIGVLRRQPISPSMQA) the chain is Cytoplasmic.

It is found in the endoplasmic reticulum-Golgi intermediate compartment membrane. The sequence is that of Protein ERGIC-53-like (Lman1l) from Mus musculus (Mouse).